The sequence spans 435 residues: Manganese transport system membrane protein MntC (435 aa).

The next 9 membrane-spanning stretches (helical) occupy residues 17–37, 42–62, 68–88, 98–118, 143–163, 166–186, 189–209, 228–248, and 255–275; these read VLAGTLLLGTASGVLGSFVLL, LIGDAMAHSALPGVCLAFLFT, PFFLLGAALAGLLGTFCIQLI, SAIGIVLSVFFGVGIILLTYI, QDIILIAGISAVLLLLCIVFF, FTLITFDLAFAKGLGIPVRFL, LLACLIVCAVVIGLQTVGVIL, LTGMIIIAGITGGVSGVAGTL, and GMATGPLMILSATLLFLFSMI.

The protein belongs to the ABC-3 integral membrane protein family. In terms of assembly, the complex is probably composed of two ATP-binding proteins (MntB), two transmembrane proteins (MntC and MntD) and a solute-binding protein (MntA).

It localises to the cell membrane. Functionally, probably part of the ABC transporter complex MntABCD involved in manganese import. Probably responsible for the translocation of the substrate across the membrane. This Bacillus subtilis (strain 168) protein is Manganese transport system membrane protein MntC.